Reading from the N-terminus, the 413-residue chain is Alpha-ketoglutarate-dependent xanthine dioxygenase xan1 (413 aa).

Over residues 1-18 the composition is skewed to low complexity; it reads MSATATTTVVEPPTTTLT. Positions 1-24 are disordered; the sequence is MSATATTTVVEPPTTTLTGATEPP. Fe cation is bound by residues H183 and D185. 2-oxoglutarate contacts are provided by T228 and W362. A Fe cation-binding site is contributed by H377. A 2-oxoglutarate-binding site is contributed by R389.

It belongs to the TfdA dioxygenase family. The cofactor is Fe(2+).

It localises to the cytoplasm. The protein resides in the cytosol. It catalyses the reaction xanthine + 2-oxoglutarate + O2 = urate + succinate + CO2. Functionally, alpha-ketoglutarate-dependent xanthine dioxygenase is a non-heme mononuclear Fe(2+) enzyme that decarboxylates alpha-ketoglutarate to succinate and CO(2) while hydroxylating xanthine to generate uric acid. Allows xanthine utilization as a nitrogen source. The chain is Alpha-ketoglutarate-dependent xanthine dioxygenase xan1 (xan1) from Schizosaccharomyces pombe (strain 972 / ATCC 24843) (Fission yeast).